The chain runs to 154 residues: Calmodulin-like protein 4 (154 aa).

EF-hand domains follow at residues 7-42, 43-78, 80-115, and 116-151; these read EQMV…LGLE, PTDQ…KMKD, DGDE…LGEK, and MTDE…AERK. Ca(2+) contacts are provided by Asp20, Asn22, Asp24, Cys26, Glu31, Asp56, Asp58, Asn60, Glu67, Asp93, Asp95, Asn97, and Glu104. Position 115 is an N6,N6,N6-trimethyllysine (Lys115). Asp129, Asp131, Asp133, Gln135, and Glu140 together coordinate Ca(2+).

It belongs to the calmodulin family.

Potential calcium sensor. The protein is Calmodulin-like protein 4 (CML4) of Oryza sativa subsp. japonica (Rice).